The chain runs to 158 residues: RING-H2 finger protein ATL66 (158 aa).

A helical membrane pass occupies residues 33 to 53 (LFFALALFSVVLFFALLTLYI). The segment at 107 to 149 (CCICLGGFEEGEKMKVLPPCSHCYHCECVDRWLKTESSCPLCR) adopts an RING-type; atypical zinc-finger fold.

Belongs to the RING-type zinc finger family. ATL subfamily.

It is found in the membrane. The enzyme catalyses S-ubiquitinyl-[E2 ubiquitin-conjugating enzyme]-L-cysteine + [acceptor protein]-L-lysine = [E2 ubiquitin-conjugating enzyme]-L-cysteine + N(6)-ubiquitinyl-[acceptor protein]-L-lysine.. It functions in the pathway protein modification; protein ubiquitination. The polypeptide is RING-H2 finger protein ATL66 (ATL66) (Arabidopsis thaliana (Mouse-ear cress)).